Reading from the N-terminus, the 303-residue chain is Putative band 7 family protein R614 (303 aa).

Belongs to the band 7/mec-2 family.

The chain is Putative band 7 family protein R614 from Acanthamoeba polyphaga (Amoeba).